The following is a 285-amino-acid chain: MTALLIDGNALSKTLRAQAAERAAALTARGHQPGLAVILVGANPASEVYVRNKIKACEDNGFFSLKDAYPATLSEADLLARIDELNRDPKIHGILVQLPLPAHIDSHKVIEAIAPEKDVDGFHVANAGALMTGKPLFRPCTPYGVMKMFEAHGIALQGANAVVIGRSNIVGKPMAMMLLDAGATVTICHSKTRDLAAHTREADIVVAAVGKRNILTADMVKPGATVIDVGMNRDDAGKLCGDVDFAGVKEVAGYITPVPGGVGPMTITMLLINTIESAERAAAAA.

NADP(+) contacts are provided by residues 165–167 (GRS) and Ser190.

Belongs to the tetrahydrofolate dehydrogenase/cyclohydrolase family. Homodimer.

It catalyses the reaction (6R)-5,10-methylene-5,6,7,8-tetrahydrofolate + NADP(+) = (6R)-5,10-methenyltetrahydrofolate + NADPH. The catalysed reaction is (6R)-5,10-methenyltetrahydrofolate + H2O = (6R)-10-formyltetrahydrofolate + H(+). It functions in the pathway one-carbon metabolism; tetrahydrofolate interconversion. Its function is as follows. Catalyzes the oxidation of 5,10-methylenetetrahydrofolate to 5,10-methenyltetrahydrofolate and then the hydrolysis of 5,10-methenyltetrahydrofolate to 10-formyltetrahydrofolate. This chain is Bifunctional protein FolD, found in Burkholderia cenocepacia (strain HI2424).